A 181-amino-acid polypeptide reads, in one-letter code: Putative manganese efflux pump MntP (181 aa).

The next 6 helical transmembrane spans lie at 4-24 (VVLL…GLGA), 31-51 (VVLG…MPLI), 59-79 (MLGW…ALIA), 102-122 (VLLL…FALT), 129-149 (LVSC…GVFI), and 161-181 (AELA…AVAV).

It belongs to the MntP (TC 9.B.29) family.

It is found in the cell inner membrane. In terms of biological role, probably functions as a manganese efflux pump. The polypeptide is Putative manganese efflux pump MntP (Saccharophagus degradans (strain 2-40 / ATCC 43961 / DSM 17024)).